The chain runs to 298 residues: uncharacterized protein (298 aa).

The 102-residue stretch at 194–295 (KRLNTALIAI…QLSPSQYRKS (102 aa)) folds into the HTH araC/xylS-type domain. 2 DNA-binding regions (H-T-H motif) span residues 214 to 235 (EQLAELATMSRANFIRIFQQHI) and 262 to 285 (VLAIALEVGYQSEAHFCKVFKNYY).

This is an uncharacterized protein from Haemophilus influenzae (strain ATCC 51907 / DSM 11121 / KW20 / Rd).